Reading from the N-terminus, the 885-residue chain is Probable alpha-glucosidase Os06g0675700 (885 aa).

A signal peptide spans 1 to 33; that stretch reads MMGSPPAPPARRLGALAVFLLALFLAAPWGVDC. N-linked (GlcNAc...) asparagine glycans are attached at residues Asn-195, Asn-378, and Asn-397. Active-site residues include Asp-443 and Glu-446. 2 N-linked (GlcNAc...) asparagine glycosylation sites follow: Asn-467 and Asn-477. The active-site Proton donor is the Asp-540. 2 N-linked (GlcNAc...) asparagine glycosylation sites follow: Asn-576 and Asn-844.

Belongs to the glycosyl hydrolase 31 family.

It catalyses the reaction Hydrolysis of terminal, non-reducing (1-&gt;4)-linked alpha-D-glucose residues with release of alpha-D-glucose.. In Oryza sativa subsp. japonica (Rice), this protein is Probable alpha-glucosidase Os06g0675700.